The primary structure comprises 182 residues: Ribulose bisphosphate carboxylase small subunit, chloroplastic (182 aa).

The transit peptide at 1–58 directs the protein to the chloroplast; it reads MASSMISSATIATVNCSSPAQANMVAPFTGLKSASAFPVTRKANNDITSLASNGGRVQ.

The protein belongs to the RuBisCO small chain family. Heterohexadecamer of 8 large and 8 small subunits.

It localises to the plastid. It is found in the chloroplast. Its function is as follows. RuBisCO catalyzes two reactions: the carboxylation of D-ribulose 1,5-bisphosphate, the primary event in carbon dioxide fixation, as well as the oxidative fragmentation of the pentose substrate. Both reactions occur simultaneously and in competition at the same active site. Although the small subunit is not catalytic it is essential for maximal activity. The chain is Ribulose bisphosphate carboxylase small subunit, chloroplastic from Gossypium hirsutum (Upland cotton).